We begin with the raw amino-acid sequence, 196 residues long: Peptide deformylase (196 aa).

Fe cation is bound by residues C105 and H147. E148 is a catalytic residue. H151 serves as a coordination point for Fe cation.

The protein belongs to the polypeptide deformylase family. Requires Fe(2+) as cofactor.

It carries out the reaction N-terminal N-formyl-L-methionyl-[peptide] + H2O = N-terminal L-methionyl-[peptide] + formate. Its function is as follows. Removes the formyl group from the N-terminal Met of newly synthesized proteins. Requires at least a dipeptide for an efficient rate of reaction. N-terminal L-methionine is a prerequisite for activity but the enzyme has broad specificity at other positions. This chain is Peptide deformylase, found in Christiangramia forsetii (strain DSM 17595 / CGMCC 1.15422 / KT0803) (Gramella forsetii).